Here is a 156-residue protein sequence, read N- to C-terminus: MIP18 family protein galla-2 (156 aa).

It belongs to the MIP18 family. Component of the CGX complex composed of crb, galla (galla-1 or galla-2) and Xpd. Interacts with crb (via intracellular domain). Also able to interact with Xpd in the absence of crb. Interacts with Mms19.

Functionally, component of the crb-galla-Xpd (CGX) complex which is essential for proper mitotic chromosome segregation in early embryos. The CGX complex is also required for cell proliferation in developing wing disks. In the CGX complex, acts with crb to recruit Xpd thus forming the functional complex. This is MIP18 family protein galla-2 from Drosophila melanogaster (Fruit fly).